Here is a 1036-residue protein sequence, read N- to C-terminus: MDNEDKISISAKEEKILSFWKEQDIFQKTLDNREGCPTFSFYDGPPFATGLPHYGHLLAGTIKDVVCRYASMDGHYVPRRFGWDCHGVPVEYEVEKSLGLTEPGAIERFGVANFNEECRKIVFRYADEWKYFVDRIGRWVDFSATWRTMDLSFMESVWWVFRSLYDQGLVYEGTKVVPFSTKLGTPLSNFEAGQNYKEVDDPSVVVKFALQDNQGFLLAWTTTPWTLVSNMALAVHPELTYVRIKDKESGDEYILGQESLPRWFPDRESYEWIGQLSGKSLVGQSYEPLFPYFQDKKELGAFRILPADFIEESEGTGIVHMAPAFGEADFFACQEHNVPLVCPVDNQGCYTAEVKDFVGEYIKSADKGIARRLKNENKLFYQGTVRHRYPFCWRTDSPLIYKAVNSWFVAVEKVKSKMLKANESIHWTPGHIKQGRFGKWLEGARDWAISRNRYWGTPIPIWRSDDGELLVIGSIQELEALSGQKIVDLHRHFIDEIEINQNGKSFRRIPYVFDCWFDSGAMPYAQNHYPFERAEETEACFPADFIAEGLDQTRGWFYTLTVIAAALFDQPAFKNVIVNGIILAEDGNKMSKRLNNYPSPKMIMDAYGADALRLYLLNSVVVKAEDLRFSDKGVESVLKQVLLPLSNALAFYKTYAELYGFDPKETDNIELAEIDRWILSSLYSLLGKTRESMSQYDLHAAVNPFVDFIEDLTNWYIRRSRRRFWDAEDSADRRAAFSTLYEVLVVFSKVIAPFIPFISEDMYQQLRGETDPESVHLCDFPHVVLEKILPNLERKMQDIREIVALGHSLRKEHKLKVRQPLQNVYIVGSQERMEALAQVGSLIGEELNVKDVHFCSETPEYVTTLIKPNFRTLGKKVGNRLPEIQRALAGLPQEQIQAFMHKGQMVVSLGEETISLDKEDITVSWASAEGFVARSSASFVAVLDCQLTEPLIMEGIARELVNKINTMRRNGKLHVSDRIAIRLHAPVIVQEAFALHKEYICEETLTTSVSVIDYKEGEEWDINGHAVSFVLERVER.

The 'HIGH' region motif lies at 46 to 56 (PFATGLPHYGH). The 'KMSKS' region signature appears at 589–593 (KMSKR). K592 provides a ligand contact to ATP.

It belongs to the class-I aminoacyl-tRNA synthetase family. IleS type 2 subfamily. In terms of assembly, monomer. The cofactor is Zn(2+).

Its subcellular location is the cytoplasm. It catalyses the reaction tRNA(Ile) + L-isoleucine + ATP = L-isoleucyl-tRNA(Ile) + AMP + diphosphate. In terms of biological role, catalyzes the attachment of isoleucine to tRNA(Ile). As IleRS can inadvertently accommodate and process structurally similar amino acids such as valine, to avoid such errors it has two additional distinct tRNA(Ile)-dependent editing activities. One activity is designated as 'pretransfer' editing and involves the hydrolysis of activated Val-AMP. The other activity is designated 'posttransfer' editing and involves deacylation of mischarged Val-tRNA(Ile). The protein is Isoleucine--tRNA ligase of Chlamydia trachomatis serovar L2b (strain UCH-1/proctitis).